The sequence spans 337 residues: MRAVFIQGAEEHPAAFCYQVNGSCPRTVHTLGIQLVIYLACAAGMLIIVLGNLFVAFAVSYFKALHTPTNFLLLSLALADMFLGLLVLPLSTIRSVESCWFFGDFLCRLHTYLDPLFCLTSIFHLCFISIDRHCAICDPLLYPSKFTVRVALRYILAGWGVPAAYTSLFLYTDVVETRLSQWLEEMPCVGSCQLLLNKFWGWLNFPLFFVPCLIMISLYVKIFVVATRQAQQITTLSKNLAGAAKHDRKAAKTLGIAVGIYLLCWLPFTIDTMVDSLLHFITPPLVFDIFIWFAYFNSACNPIIYVFSYQWFRKALKLTLSQKVFSPQTRTVDLYQE.

Topologically, residues 1-34 (MRAVFIQGAEEHPAAFCYQVNGSCPRTVHTLGIQ) are extracellular. N-linked (GlcNAc...) asparagine glycosylation occurs at Asn-21. Cystine bridges form between Cys-24-Cys-188 and Cys-99-Cys-192. Residues 35–55 (LVIYLACAAGMLIIVLGNLFV) form a helical membrane-spanning segment. The Cytoplasmic segment spans residues 56 to 70 (AFAVSYFKALHTPTN). Residues 71–91 (FLLLSLALADMFLGLLVLPLS) form a helical membrane-spanning segment. The Extracellular segment spans residues 92–109 (TIRSVESCWFFGDFLCRL). The helical transmembrane segment at 110-130 (HTYLDPLFCLTSIFHLCFISI) threads the bilayer. The Cytoplasmic portion of the chain corresponds to 131–154 (DRHCAICDPLLYPSKFTVRVALRY). A helical transmembrane segment spans residues 155–175 (ILAGWGVPAAYTSLFLYTDVV). The tract at residues 176–189 (ETRLSQWLEEMPCV) is extracellular Loop 2 (ECL2). The Extracellular segment spans residues 176-204 (ETRLSQWLEEMPCVGSCQLLLNKFWGWLN). The chain crosses the membrane as a helical span at residues 205-225 (FPLFFVPCLIMISLYVKIFVV). The Cytoplasmic segment spans residues 226–253 (ATRQAQQITTLSKNLAGAAKHDRKAAKT). Residues 254–274 (LGIAVGIYLLCWLPFTIDTMV) form a helical membrane-spanning segment. Residues 275-284 (DSLLHFITPP) lie on the Extracellular side of the membrane. A helical membrane pass occupies residues 285–307 (LVFDIFIWFAYFNSACNPIIYVF). The Cytoplasmic portion of the chain corresponds to 308–337 (SYQWFRKALKLTLSQKVFSPQTRTVDLYQE).

This sequence belongs to the G-protein coupled receptor 1 family.

Its subcellular location is the cell membrane. In terms of biological role, olfactory receptor specific for trimethylamine, a trace amine. Trimethylamine is a bacterial metabolite found in some animal odors. Trimethylamine-binding causes a conformation change that triggers signaling via G(s)-class of G alpha proteins (GNAL or GNAS). This Pan troglodytes (Chimpanzee) protein is Trace amine-associated receptor 5 (TAAR5).